Reading from the N-terminus, the 200-residue chain is 3-isopropylmalate dehydratase small subunit (200 aa).

The protein belongs to the LeuD family. LeuD type 1 subfamily. In terms of assembly, heterodimer of LeuC and LeuD.

The enzyme catalyses (2R,3S)-3-isopropylmalate = (2S)-2-isopropylmalate. Its pathway is amino-acid biosynthesis; L-leucine biosynthesis; L-leucine from 3-methyl-2-oxobutanoate: step 2/4. In terms of biological role, catalyzes the isomerization between 2-isopropylmalate and 3-isopropylmalate, via the formation of 2-isopropylmaleate. This Histophilus somni (strain 129Pt) (Haemophilus somnus) protein is 3-isopropylmalate dehydratase small subunit.